The following is a 96-amino-acid chain: Co-chaperonin GroES (96 aa).

It belongs to the GroES chaperonin family. In terms of assembly, heptamer of 7 subunits arranged in a ring. Interacts with the chaperonin GroEL.

It is found in the cytoplasm. Its function is as follows. Together with the chaperonin GroEL, plays an essential role in assisting protein folding. The GroEL-GroES system forms a nano-cage that allows encapsulation of the non-native substrate proteins and provides a physical environment optimized to promote and accelerate protein folding. GroES binds to the apical surface of the GroEL ring, thereby capping the opening of the GroEL channel. The chain is Co-chaperonin GroES from Polynucleobacter necessarius subsp. necessarius (strain STIR1).